Here is a 1231-residue protein sequence, read N- to C-terminus: Multifunctional 2-oxoglutarate metabolism enzyme (1231 aa).

The segment at 1–41 is 2-oxoglutarate dehydrogenase E1, N-terminal part; sequence MANISSPFGQNEWLVEAMYRKFRDDPSSVDPSWHEFLVDYS. Basic and acidic residues predominate over residues 24 to 37; the sequence is DDPSSVDPSWHEFL. Positions 24–56 are disordered; the sequence is DDPSSVDPSWHEFLVDYSPEPTSQPAAEPTRVT. Residues 42–88 are linker; the sequence is PEPTSQPAAEPTRVTSPLVAERAAAAAPQAPPKPADTAAAGNGVVAA. Residues 89–337 form a succinyltransferase E2 region; the sequence is LAAKTAVPPP…LRTIHELLLS (249 aa). Residue His-316 is the Proton acceptor; for succinyltransferase activity of the active site. A 2-oxoglutarate dehydrogenase E1, C-terminal part region spans residues 338-1231; it reads DGFWDEVFRE…QQEILDEAFG (894 aa). Arg-542 is a binding site for thiamine diphosphate. His-581 and Ser-606 together coordinate 2-oxoglutarate. Positions 606, 608, 649, 650, 651, and 682 each coordinate thiamine diphosphate. A Mg(2+)-binding site is contributed by Asp-649. The Mg(2+) site is built by Asn-682 and Ile-684. Residues 787-817 adopt a coiled-coil conformation; the sequence is DISMKEAEDALRDYQGQLERVFNEVRELEKH. His-1024 is a 2-oxoglutarate binding site. The acetyl-CoA site is built by Thr-1042, Arg-1058, Lys-1093, Ser-1096, Gln-1146, Arg-1153, and Arg-1154.

It belongs to the 2-oxoacid dehydrogenase family. Kgd subfamily. Homodimer. The 2-oxoglutarate dehydrogenase (ODH) complex contains multiple copies of three enzymatic components: 2-oxoglutarate dehydrogenase (E1), dihydrolipoamide succinyltransferase (E2) and lipoamide dehydrogenase (E3). Requires Mg(2+) as cofactor. The cofactor is thiamine diphosphate.

It catalyses the reaction glyoxylate + 2-oxoglutarate + H(+) = 2-hydroxy-3-oxoadipate + CO2. It carries out the reaction 2-oxoglutarate + H(+) = succinate semialdehyde + CO2. The enzyme catalyses N(6)-[(R)-lipoyl]-L-lysyl-[protein] + 2-oxoglutarate + H(+) = N(6)-[(R)-S(8)-succinyldihydrolipoyl]-L-lysyl-[protein] + CO2. The catalysed reaction is N(6)-[(R)-dihydrolipoyl]-L-lysyl-[protein] + succinyl-CoA = N(6)-[(R)-S(8)-succinyldihydrolipoyl]-L-lysyl-[protein] + CoA. It functions in the pathway carbohydrate metabolism; tricarboxylic acid cycle; succinate from 2-oxoglutarate (transferase route): step 1/2. It participates in carbohydrate metabolism; tricarboxylic acid cycle; succinyl-CoA from 2-oxoglutarate (dehydrogenase route): step 1/1. Its activity is regulated as follows. Alpha-ketoglutarate dehydrogenase and decarboxylase activities are inhibited by unphosphorylated GarA, and allosterically activated by acetyl-CoA, the main substrate of the TCA cycle. Its function is as follows. Shows three enzymatic activities that share a first common step, the attack of thiamine-PP on 2-oxoglutarate (alpha-ketoglutarate, KG), leading to the formation of an enamine-thiamine-PP intermediate upon decarboxylation. Thus, displays KGD activity, catalyzing the decarboxylation from five-carbon 2-oxoglutarate to four-carbon succinate semialdehyde (SSA). Also catalyzes C-C bond formation between the activated aldehyde formed after decarboxylation of alpha-ketoglutarate and the carbonyl of glyoxylate (GLX), to yield 2-hydroxy-3-oxoadipate (HOA), which spontaneously decarboxylates to form 5-hydroxylevulinate (HLA). And is also a component of the 2-oxoglutarate dehydrogenase (ODH) complex, that catalyzes the overall conversion of 2-oxoglutarate to succinyl-CoA and CO(2). The KG decarboxylase and KG dehydrogenase reactions provide two alternative, tightly regulated, pathways connecting the oxidative and reductive branches of the TCA cycle. This Mycobacterium bovis (strain ATCC BAA-935 / AF2122/97) protein is Multifunctional 2-oxoglutarate metabolism enzyme (kgd).